The chain runs to 361 residues: Mannonate dehydratase 1 (361 aa).

The protein belongs to the mannonate dehydratase family. It depends on Fe(2+) as a cofactor. Requires Mn(2+) as cofactor.

The enzyme catalyses D-mannonate = 2-dehydro-3-deoxy-D-gluconate + H2O. Its pathway is carbohydrate metabolism; pentose and glucuronate interconversion. Its function is as follows. Catalyzes the dehydration of D-mannonate. The sequence is that of Mannonate dehydratase 1 (uxuA1) from Halalkalibacterium halodurans (strain ATCC BAA-125 / DSM 18197 / FERM 7344 / JCM 9153 / C-125) (Bacillus halodurans).